A 147-amino-acid polypeptide reads, in one-letter code: uncharacterized protein (147 aa).

The tract at residues Gly-30 to Phe-102 is disordered. The span at Arg-62–Gln-71 shows a compositional bias: polar residues.

This is an uncharacterized protein from Homo sapiens (Human).